The chain runs to 156 residues: Mitochondrial translation release factor in rescue (156 aa).

The GGQ domain stretch occupies residues 44–108 (EEELEEQFVR…LREKLEVAYK (65 aa)). The GGQ motif lies at 58-60 (GGQ). Residues 100-141 (REKLEVAYKGEESELLKMKKESMQKKQDKRRKVNENIEKKRR) adopt a coiled-coil conformation. Basic and acidic residues-rich tracts occupy residues 114–125 (LLKMKKESMQKK) and 132–156 (VNEN…DKST). The disordered stretch occupies residues 114–156 (LLKMKKESMQKKQDKRRKVNENIEKKRRFKEMLNSKQEDDKST).

The protein belongs to the prokaryotic/mitochondrial release factor family. In terms of assembly, interacts (via C-terminus) with MTRES1 (via S4 domain). Associates with mitoribosomal S39 large subunit, peptidyl tRNA and nascent chain.

It localises to the mitochondrion. Its function is as follows. Part of a mitoribosome-associated quality control pathway that prevents aberrant translation by responding to interruptions during elongation. As heterodimer with MTRES1, ejects the unfinished nascent chain and peptidyl transfer RNA (tRNA), respectively, from stalled ribosomes. Recruitment of mitoribosome biogenesis factors to these quality control intermediates suggests additional roles for MTRES1 and MTRF during mitoribosome rescue. This chain is Mitochondrial translation release factor in rescue (mtrfr), found in Danio rerio (Zebrafish).